A 305-amino-acid chain; its full sequence is Aspartate carbamoyltransferase catalytic subunit (305 aa).

Positions 51 and 52 each coordinate carbamoyl phosphate. K79 contributes to the L-aspartate binding site. Carbamoyl phosphate is bound by residues R101, H130, and Q133. L-aspartate is bound by residues R163 and R215. Carbamoyl phosphate-binding residues include G256 and P257.

Belongs to the aspartate/ornithine carbamoyltransferase superfamily. ATCase family. As to quaternary structure, heterododecamer (2C3:3R2) of six catalytic PyrB chains organized as two trimers (C3), and six regulatory PyrI chains organized as three dimers (R2).

The enzyme catalyses carbamoyl phosphate + L-aspartate = N-carbamoyl-L-aspartate + phosphate + H(+). The protein operates within pyrimidine metabolism; UMP biosynthesis via de novo pathway; (S)-dihydroorotate from bicarbonate: step 2/3. Catalyzes the condensation of carbamoyl phosphate and aspartate to form carbamoyl aspartate and inorganic phosphate, the committed step in the de novo pyrimidine nucleotide biosynthesis pathway. The polypeptide is Aspartate carbamoyltransferase catalytic subunit (Ehrlichia canis (strain Jake)).